A 989-amino-acid chain; its full sequence is DEAD-box ATP-dependent RNA helicase 45 (989 aa).

2 stretches are compositionally biased toward basic and acidic residues: residues 1 to 39 (MLEK…KRCD) and 64 to 101 (RDSK…EKEK). Disordered stretches follow at residues 1 to 248 (MLEK…AADE) and 305 to 330 (QGED…DDEE). Residues 88-182 (LKRDRERRER…ELKRQNEEAQ (95 aa)) are a coiled coil. At Ser-119 the chain carries Phosphoserine. A compositionally biased stretch (basic and acidic residues) spans 134 to 179 (SRHGDDDVEKKTRDEQVEDEQKQLAEEVEKRRRRVQEWQELKRQNE). Position 200 is a phosphoserine (Ser-200). Over residues 203–222 (EVKSDSEMDVDRDTKLENGG) the composition is skewed to basic and acidic residues. Residues 230 to 239 (ENETAVTVSE) are compositionally biased toward polar residues. The span at 321–330 (DPSLDEDDEE) shows a compositional bias: acidic residues. A Q motif motif is present at residues 396 to 424 (QFWHQTGLTSKILDTLKKLNYEKPMPIQA). The region spanning 427–605 (LPIIMSGRDC…RKVLNKPVEI (179 aa)) is the Helicase ATP-binding domain. 440 to 447 (AKTGSGKT) contacts ATP. The DEAD box signature appears at 553–556 (DEAD). Positions 590-748 (QVETLARKVL…PVPDDVKAVA (159 aa)) constitute a Helicase C-terminal domain.

This sequence belongs to the DEAD box helicase family. DDX46/PRP5 subfamily.

It carries out the reaction ATP + H2O = ADP + phosphate + H(+). The protein is DEAD-box ATP-dependent RNA helicase 45 (RH45) of Arabidopsis thaliana (Mouse-ear cress).